Here is a 699-residue protein sequence, read N- to C-terminus: Long-chain-fatty-acid--CoA ligase 1 (699 aa).

Methionine 1 carries the N-acetylmethionine modification. Tyrosine 9 carries the post-translational modification 3'-nitrotyrosine. A helical; Signal-anchor for type III membrane protein membrane pass occupies residues 25 to 45 (LPTNTLMGFGAFAALTTFWYA). Residues 46–699 (TRPKALKPPC…IDELYSTIKI (654 aa)) are Cytoplasmic-facing. At tyrosine 85 the chain carries Phosphotyrosine. Tyrosine 86 is subject to 3'-nitrotyrosine. Serine 136 carries an O-linked (GlcNAc) serine glycan. N6-acetyllysine occurs at positions 208, 357, and 387. Residue serine 621 is modified to Phosphoserine. Lysine 633 is subject to N6-acetyllysine.

Belongs to the ATP-dependent AMP-binding enzyme family. Mg(2+) serves as cofactor. As to expression, liver, heart, epididymal adipose and to a lesser extent brain, small intestine and lung.

The protein resides in the mitochondrion outer membrane. Its subcellular location is the peroxisome membrane. The protein localises to the microsome membrane. It is found in the endoplasmic reticulum membrane. The catalysed reaction is a long-chain fatty acid + ATP + CoA = a long-chain fatty acyl-CoA + AMP + diphosphate. It carries out the reaction (5Z,8Z,11Z,14Z)-eicosatetraenoate + ATP + CoA = (5Z,8Z,11Z,14Z)-eicosatetraenoyl-CoA + AMP + diphosphate. It catalyses the reaction 3,7,11,15-tetramethylhexadecanoate + ATP + CoA = phytanoyl-CoA + AMP + diphosphate. The enzyme catalyses hexadecanoate + ATP + CoA = hexadecanoyl-CoA + AMP + diphosphate. The catalysed reaction is (E)-hexadec-2-enoate + ATP + CoA = (2E)-hexadecenoyl-CoA + AMP + diphosphate. It carries out the reaction 2,6,10,14-tetramethylpentadecanoate + ATP + CoA = pristanoyl-CoA + AMP + diphosphate. It catalyses the reaction 14,15-epoxy-(5Z,8Z,11Z)-eicosatrienoate + ATP + CoA = 14,15-epoxy-(5Z,8Z,11Z)-eicosatrienoyl-CoA + AMP + diphosphate. The enzyme catalyses 5-hydroxy-(6E,8Z,11Z,14Z)-eicosatetraenoate + ATP + CoA = 5-hydroxy-(6E,8Z,11Z,14Z)-eicosatetraenoyl-CoA + AMP + diphosphate. The catalysed reaction is 12-hydroxy-(5Z,8Z,10E,14Z)-eicosatetraenoate + ATP + CoA = 12-hydroxy-(5Z,8Z,10E,14Z)-eicosatetraenoyl-CoA + AMP + diphosphate. It carries out the reaction 15-hydroxy-(5Z,8Z,11Z,13E)-eicosatetraenoate + ATP + CoA = 15-hydroxy-(5Z,8Z,11Z,13E)-eicosatetraenoyl-CoA + AMP + diphosphate. It catalyses the reaction (9Z)-octadecenoate + ATP + CoA = (9Z)-octadecenoyl-CoA + AMP + diphosphate. Inhibited at high temperature and by arachidonate. Functionally, catalyzes the conversion of long-chain fatty acids to their active form acyl-CoAs for both synthesis of cellular lipids, and degradation via beta-oxidation. Preferentially uses palmitoleate, oleate and linoleate. Preferentially activates arachidonate than epoxyeicosatrienoic acids (EETs) or hydroxyeicosatrienoic acids (HETEs). The sequence is that of Long-chain-fatty-acid--CoA ligase 1 from Rattus norvegicus (Rat).